The chain runs to 387 residues: Formate-dependent phosphoribosylglycinamide formyltransferase (387 aa).

N(1)-(5-phospho-beta-D-ribosyl)glycinamide-binding positions include 21–22 (EL) and E81. ATP-binding positions include R113, K154, 159–164 (SSGHGQ), 193–196 (EEFV), and E201. In terms of domain architecture, ATP-grasp spans 118-306 (VFAAETLDLK…EFALHVRAVL (189 aa)). Mg(2+)-binding residues include E265 and E277. Residues D284, K352, and 359–360 (RR) contribute to the N(1)-(5-phospho-beta-D-ribosyl)glycinamide site.

It belongs to the PurK/PurT family. In terms of assembly, homodimer.

It catalyses the reaction N(1)-(5-phospho-beta-D-ribosyl)glycinamide + formate + ATP = N(2)-formyl-N(1)-(5-phospho-beta-D-ribosyl)glycinamide + ADP + phosphate + H(+). It participates in purine metabolism; IMP biosynthesis via de novo pathway; N(2)-formyl-N(1)-(5-phospho-D-ribosyl)glycinamide from N(1)-(5-phospho-D-ribosyl)glycinamide (formate route): step 1/1. Involved in the de novo purine biosynthesis. Catalyzes the transfer of formate to 5-phospho-ribosyl-glycinamide (GAR), producing 5-phospho-ribosyl-N-formylglycinamide (FGAR). Formate is provided by PurU via hydrolysis of 10-formyl-tetrahydrofolate. The protein is Formate-dependent phosphoribosylglycinamide formyltransferase of Sulfurovum sp. (strain NBC37-1).